Consider the following 252-residue polypeptide: tRNA (guanine-N(1)-)-methyltransferase (252 aa).

S-adenosyl-L-methionine-binding positions include glycine 113 and 133 to 138; that span reads IGDYVL.

It belongs to the RNA methyltransferase TrmD family. As to quaternary structure, homodimer.

It is found in the cytoplasm. The catalysed reaction is guanosine(37) in tRNA + S-adenosyl-L-methionine = N(1)-methylguanosine(37) in tRNA + S-adenosyl-L-homocysteine + H(+). Functionally, specifically methylates guanosine-37 in various tRNAs. The chain is tRNA (guanine-N(1)-)-methyltransferase from Baumannia cicadellinicola subsp. Homalodisca coagulata.